The chain runs to 230 residues: MSSVTTPAPVYTWTADEAIKFLKEWNFSLGIILLFITVILQFGYTSRSMFVYVIKMIILWLMWPLTIILTIFNCVYALNNVYLGFSIVFTIVAIIMWIVYFVNSIRLFIRTGSWWSFNPETNNLMCIDMKGRMYVRPIIEDYHTLTVTIIRGHLYMQGIKLGTGYSLSDLPAYVTVAKVSHLLTYKRGFLDKIGDTSGFAVYVKSKVGNYRLPSTQKGSGMDTALLRNNI.

Over 1–24 (MSSVTTPAPVYTWTADEAIKFLKE) the chain is Virion surface. A helical transmembrane segment spans residues 25–45 (WNFSLGIILLFITVILQFGYT). The Intravirion segment spans residues 46-55 (SRSMFVYVIK). Residues 56–76 (MIILWLMWPLTIILTIFNCVY) form a helical membrane-spanning segment. Residues 77–84 (ALNNVYLG) lie on the Virion surface side of the membrane. The chain crosses the membrane as a helical span at residues 85-105 (FSIVFTIVAIIMWIVYFVNSI). Residues 106-228 (RLFIRTGSWW…SGMDTALLRN (123 aa)) are Intravirion-facing.

It belongs to the betacoronaviruses M protein family. As to quaternary structure, homomultimer. Interacts with envelope E protein in the budding compartment of the host cell, which is located between endoplasmic reticulum and the Golgi complex. Forms a complex with HE and S proteins. Interacts with nucleocapsid N protein. This interaction probably participates in RNA packaging into the virus.

The protein localises to the virion membrane. The protein resides in the host Golgi apparatus membrane. Functionally, component of the viral envelope that plays a central role in virus morphogenesis and assembly via its interactions with other viral proteins. In Bos taurus (Bovine), this protein is Membrane protein.